Reading from the N-terminus, the 972-residue chain is N-alpha-acetyltransferase 25, NatB auxiliary subunit (972 aa).

TPR repeat units follow at residues N11–L44, H45–D78, D79–S112, and E114–N146.

The protein belongs to the MDM20/NAA25 family. In terms of assembly, component of the N-terminal acetyltransferase B (NatB) complex which is composed of NAA20 and NAA25.

Its subcellular location is the cytoplasm. Functionally, non-catalytic subunit of the NatB complex which catalyzes acetylation of the N-terminal methionine residues of peptides beginning with Met-Asp, Met-Glu, Met-Asn and Met-Gln. May play a role in normal cell-cycle progression. The polypeptide is N-alpha-acetyltransferase 25, NatB auxiliary subunit (NAA25) (Homo sapiens (Human)).